We begin with the raw amino-acid sequence, 479 residues long: Mannose-1-phosphate guanylyltransferase RfbM (479 aa).

This sequence belongs to the mannose-6-phosphate isomerase type 2 family. As to quaternary structure, homodimer.

It carries out the reaction alpha-D-mannose 1-phosphate + GTP + H(+) = GDP-alpha-D-mannose + diphosphate. It participates in nucleotide-sugar biosynthesis; GDP-alpha-D-mannose biosynthesis; GDP-alpha-D-mannose from alpha-D-mannose 1-phosphate (GTP route): step 1/1. The protein operates within bacterial outer membrane biogenesis; LPS O-antigen biosynthesis. Involved in GDP-mannose biosynthesis which serves as the activated sugar nucleotide precursor for mannose residues in cell surface polysaccharides. This enzyme participates in synthesis of the LPS group B O antigen. The polypeptide is Mannose-1-phosphate guanylyltransferase RfbM (rfbM) (Salmonella typhimurium (strain LT2 / SGSC1412 / ATCC 700720)).